A 420-amino-acid chain; its full sequence is Protein disulfide isomerase Creld1 (420 aa).

The first 29 residues, 1–29, serve as a signal peptide directing secretion; it reads MAPQPLRGLVPFLLWCLSLFLSLPGPVWL. The Extracellular portion of the chain corresponds to 30 to 362; it reads QPSPPPHSAP…GFFAEMTEDE (333 aa). The CXXC signature appears at 46–49; that stretch reads CHTC. 4 disulfide bridges follow: cysteine 46–cysteine 49, cysteine 155–cysteine 169, cysteine 163–cysteine 181, and cysteine 183–cysteine 192. In terms of domain architecture, EGF-like 1 spans 153–193; sequence LPCPGGTERPCGGYGQCEGEGTRGGSGHCDCQAGYGGEACG. An N-linked (GlcNAc...) asparagine glycan is attached at asparagine 205. FU repeat units lie at residues 208 to 255 and 268 to 315; these read HLVC…EQAT and SYEC…VVCP. The short motif at 278 to 281 is the CXXC element; that stretch reads CLGC. 4 disulfide bridges follow: cysteine 278–cysteine 281, cysteine 309–cysteine 321, cysteine 314–cysteine 330, and cysteine 332–cysteine 343. The 38-residue stretch at 305–342 folds into the EGF-like 2; calcium-binding domain; that stretch reads DVDECETVVCPGENEQCENTEGSYRCVCAEGFRQEDGI. Residues 363–383 form a helical membrane-spanning segment; it reads MVVLQQMFFGVIICALATLAA. Residue lysine 384 is a topological domain, cytoplasmic. Residues 385-405 form a helical membrane-spanning segment; that stretch reads GDLVFTAIFIGAVAAMTGYWL. Over 406 to 420 the chain is Extracellular; sequence SERSDRVLEGFIKGR.

It belongs to the CRELD family.

The protein localises to the membrane. It carries out the reaction Catalyzes the rearrangement of -S-S- bonds in proteins.. In terms of biological role, protein disulfide isomerase. Promotes the localization of acetylcholine receptors (AChRs) to the plasma membrane. This chain is Protein disulfide isomerase Creld1 (Creld1), found in Rattus norvegicus (Rat).